The sequence spans 96 residues: uncharacterized protein (96 aa).

The HTH cro/C1-type domain occupies 38–91 (IEQLRKGTGLKIDDFARVLGVSVAMVKEWESRRVKPSSAELKLMRLIQANPALS). Positions 49 to 68 (IDDFARVLGVSVAMVKEWES) form a DNA-binding region, H-T-H motif.

This is an uncharacterized protein from Escherichia coli O157:H7.